Here is a 728-residue protein sequence, read N- to C-terminus: Procollagen-lysine,2-oxoglutarate 5-dioxygenase 1 (728 aa).

An N-terminal signal peptide occupies residues 1 to 18 (MRSLLLLAPLAWLLLVQA). N-linked (GlcNAc...) asparagine glycosylation is found at N198 and N539. The region spanning 637–728 (QFDLAFVVRY…RYIAVSFVDP (92 aa)) is the Fe2OG dioxygenase domain. Positions 657 and 659 each coordinate Fe cation. A glycan (N-linked (GlcNAc...) asparagine) is linked at N687. Residue H709 participates in Fe cation binding. Residue R719 is part of the active site.

As to quaternary structure, homodimer. Identified in a complex with P3H3 and P3H4. Fe(2+) is required as a cofactor. Requires L-ascorbate as cofactor. As to expression, highly expressed in the liver, heart, lung, skeletal muscle and kidney.

It localises to the rough endoplasmic reticulum membrane. It catalyses the reaction L-lysyl-[collagen] + 2-oxoglutarate + O2 = (5R)-5-hydroxy-L-lysyl-[collagen] + succinate + CO2. Its function is as follows. Part of a complex composed of PLOD1, P3H3 and P3H4 that catalyzes hydroxylation of lysine residues in collagen alpha chains and is required for normal assembly and cross-linkling of collagen fibrils. Forms hydroxylysine residues in -Xaa-Lys-Gly- sequences in collagens. These hydroxylysines serve as sites of attachment for carbohydrate units and are essential for the stability of the intermolecular collagen cross-links. This chain is Procollagen-lysine,2-oxoglutarate 5-dioxygenase 1 (Plod1), found in Mus musculus (Mouse).